The primary structure comprises 363 residues: NAD kinase 1 (363 aa).

The Proton acceptor role is filled by D68. Residues 68 to 69, R73, 175 to 176, R186, D205, A240, and Q275 contribute to the NAD(+) site; these read DG and ND.

Belongs to the NAD kinase family. Requires a divalent metal cation as cofactor.

The protein resides in the cytoplasm. The catalysed reaction is NAD(+) + ATP = ADP + NADP(+) + H(+). In terms of biological role, involved in the regulation of the intracellular balance of NAD and NADP, and is a key enzyme in the biosynthesis of NADP. Catalyzes specifically the phosphorylation on 2'-hydroxyl of the adenosine moiety of NAD to yield NADP. The protein is NAD kinase 1 of Streptomyces coelicolor (strain ATCC BAA-471 / A3(2) / M145).